The sequence spans 251 residues: Uroporphyrinogen-III C-methyltransferase (251 aa).

S-adenosyl-L-homocysteine is bound by residues Pro-17, 93–95, 123–124, Met-177, and Ala-206; these read GGD and TS.

Belongs to the precorrin methyltransferase family.

The protein localises to the plastid. It localises to the chloroplast. It carries out the reaction uroporphyrinogen III + 2 S-adenosyl-L-methionine = precorrin-2 + 2 S-adenosyl-L-homocysteine + H(+). It participates in cofactor biosynthesis; adenosylcobalamin biosynthesis; precorrin-2 from uroporphyrinogen III: step 1/1. Its pathway is porphyrin-containing compound metabolism; siroheme biosynthesis; precorrin-2 from uroporphyrinogen III: step 1/1. Its function is as follows. Catalyzes the two successive C-2 and C-7 methylation reactions involved in the conversion of uroporphyrinogen III to precorrin-2 via the intermediate formation of precorrin-1. It is a step in the biosynthesis of both cobalamin (vitamin B12) and siroheme. The sequence is that of Uroporphyrinogen-III C-methyltransferase (cobA) from Cyanidium caldarium (Red alga).